The sequence spans 618 residues: uncharacterized protein (618 aa).

The protein to Rhizobium NGR234A y4qD.

This is an uncharacterized protein from Sinorhizobium fredii (strain NBRC 101917 / NGR234).